A 430-amino-acid polypeptide reads, in one-letter code: tRNA(Ile)-lysidine synthase (430 aa).

Residue 27–32 (SGGSDS) participates in ATP binding.

This sequence belongs to the tRNA(Ile)-lysidine synthase family.

The protein localises to the cytoplasm. The enzyme catalyses cytidine(34) in tRNA(Ile2) + L-lysine + ATP = lysidine(34) in tRNA(Ile2) + AMP + diphosphate + H(+). Ligates lysine onto the cytidine present at position 34 of the AUA codon-specific tRNA(Ile) that contains the anticodon CAU, in an ATP-dependent manner. Cytidine is converted to lysidine, thus changing the amino acid specificity of the tRNA from methionine to isoleucine. In Rickettsia bellii (strain OSU 85-389), this protein is tRNA(Ile)-lysidine synthase.